Reading from the N-terminus, the 65-residue chain is Probable tautomerase RSp1151 (65 aa).

Residue P2 is the Proton acceptor; via imino nitrogen of the active site.

Belongs to the 4-oxalocrotonate tautomerase family.

This chain is Probable tautomerase RSp1151, found in Ralstonia nicotianae (strain ATCC BAA-1114 / GMI1000) (Ralstonia solanacearum).